Consider the following 652-residue polypeptide: Nitrate reductase-like protein NarX (652 aa).

The nitrate reductase alpha subunit stretch occupies residues 1–251 (MTVTPRTGSR…FGDQTDVPES (251 aa)). The region spanning 53–117 (DKVVRSTHGV…AFSWYTYSPT (65 aa)) is the 4Fe-4S Mo/W bis-MGD-type domain. [4Fe-4S] cluster contacts are provided by histidine 60, cysteine 64, cysteine 68, and cysteine 103. Aspartate 233 lines the Mo-bis(molybdopterin guanine dinucleotide) pocket. The segment at 258 to 415 (VWQCASVLLT…TVAAVCRTGD (158 aa)) is nitrate reductase delta subunit. 5 helical membrane-spanning segments follow: residues 416–436 (MMGE…VAVG), 466–486 (PMFH…LVIP), 504–524 (AVVL…LLIY), 545–565 (LVLV…SGVV), and 595–615 (APLY…LWPF). A nitrate reductase gamma subunit region spans residues 416-652 (MMGELFWTVV…VLTRPRRRGW (237 aa)). 2 residues coordinate heme b: histidine 469 and histidine 479. Heme b is bound by residues histidine 602 and histidine 620.

In the N-terminal section; belongs to the nitrate reductase alpha subunit family. It in the central section; belongs to the NarJ/NarW family. The protein in the C-terminal section; belongs to the nitrate reductase gamma subunit family. [4Fe-4S] cluster is required as a cofactor. It depends on Mo-bis(molybdopterin guanine dinucleotide) as a cofactor. The cofactor is heme b.

It localises to the cell membrane. Does not seem to have nitrate reductase activity. This chain is Nitrate reductase-like protein NarX (narX), found in Mycobacterium tuberculosis (strain CDC 1551 / Oshkosh).